The following is a 360-amino-acid chain: Phospho-N-acetylmuramoyl-pentapeptide-transferase (360 aa).

A run of 10 helical transmembrane segments spans residues 26–46, 72–92, 94–114, 132–152, 168–188, 199–219, 236–256, 263–283, 288–308, and 338–358; these read AIVS…RMIA, PTMG…LWAY, SNPY…IGFV, WKYF…YLAG, VMPQ…VGTG, GLAI…AWAT, AGEL…FLWF, VFMG…IAVL, FLLV…ILQV, and VIVR…ATLK.

It belongs to the glycosyltransferase 4 family. MraY subfamily. The cofactor is Mg(2+).

It is found in the cell inner membrane. The catalysed reaction is UDP-N-acetyl-alpha-D-muramoyl-L-alanyl-gamma-D-glutamyl-meso-2,6-diaminopimeloyl-D-alanyl-D-alanine + di-trans,octa-cis-undecaprenyl phosphate = di-trans,octa-cis-undecaprenyl diphospho-N-acetyl-alpha-D-muramoyl-L-alanyl-D-glutamyl-meso-2,6-diaminopimeloyl-D-alanyl-D-alanine + UMP. It participates in cell wall biogenesis; peptidoglycan biosynthesis. In terms of biological role, catalyzes the initial step of the lipid cycle reactions in the biosynthesis of the cell wall peptidoglycan: transfers peptidoglycan precursor phospho-MurNAc-pentapeptide from UDP-MurNAc-pentapeptide onto the lipid carrier undecaprenyl phosphate, yielding undecaprenyl-pyrophosphoryl-MurNAc-pentapeptide, known as lipid I. In Citrobacter koseri (strain ATCC BAA-895 / CDC 4225-83 / SGSC4696), this protein is Phospho-N-acetylmuramoyl-pentapeptide-transferase.